Here is a 148-residue protein sequence, read N- to C-terminus: Small ribosomal subunit protein uS15 (148 aa).

Over residues 1 to 14 (MGRLHSHRHGKSHS) the composition is skewed to basic residues. The segment at 1 to 27 (MGRLHSHRHGKSHSIRPSSPKAPSWIQ) is disordered.

It belongs to the universal ribosomal protein uS15 family. Part of the 30S ribosomal subunit.

In Cenarchaeum symbiosum (strain A), this protein is Small ribosomal subunit protein uS15.